The following is a 474-amino-acid chain: 3-isopropylmalate dehydratase large subunit (474 aa).

[4Fe-4S] cluster contacts are provided by Cys355, Cys415, and Cys418.

Belongs to the aconitase/IPM isomerase family. LeuC type 1 subfamily. As to quaternary structure, heterodimer of LeuC and LeuD. [4Fe-4S] cluster is required as a cofactor.

The catalysed reaction is (2R,3S)-3-isopropylmalate = (2S)-2-isopropylmalate. The protein operates within amino-acid biosynthesis; L-leucine biosynthesis; L-leucine from 3-methyl-2-oxobutanoate: step 2/4. Functionally, catalyzes the isomerization between 2-isopropylmalate and 3-isopropylmalate, via the formation of 2-isopropylmaleate. In Shewanella sp. (strain MR-4), this protein is 3-isopropylmalate dehydratase large subunit.